Consider the following 157-residue polypeptide: 3-hydroxyacyl-[acyl-carrier-protein] dehydratase FabZ (157 aa).

Residue His-58 is part of the active site.

This sequence belongs to the thioester dehydratase family. FabZ subfamily.

It localises to the cytoplasm. The enzyme catalyses a (3R)-hydroxyacyl-[ACP] = a (2E)-enoyl-[ACP] + H2O. Functionally, involved in unsaturated fatty acids biosynthesis. Catalyzes the dehydration of short chain beta-hydroxyacyl-ACPs and long chain saturated and unsaturated beta-hydroxyacyl-ACPs. The chain is 3-hydroxyacyl-[acyl-carrier-protein] dehydratase FabZ from Brucella ovis (strain ATCC 25840 / 63/290 / NCTC 10512).